A 118-amino-acid polypeptide reads, in one-letter code: Basic phospholipase A2 PA-12C (118 aa).

7 disulfide bridges follow: C11-C71, C27-C117, C29-C45, C44-C98, C51-C91, C60-C84, and C78-C89. 3 residues coordinate Ca(2+): Y28, G30, and G32. H48 is a catalytic residue. D49 provides a ligand contact to Ca(2+). D92 is an active-site residue.

Belongs to the phospholipase A2 family. Group I subfamily. D49 sub-subfamily. Ca(2+) is required as a cofactor. As to expression, expressed by the venom gland.

The protein resides in the secreted. It catalyses the reaction a 1,2-diacyl-sn-glycero-3-phosphocholine + H2O = a 1-acyl-sn-glycero-3-phosphocholine + a fatty acid + H(+). In terms of biological role, PLA2 catalyzes the calcium-dependent hydrolysis of the 2-acyl groups in 3-sn-phosphoglycerides. The chain is Basic phospholipase A2 PA-12C from Pseudechis australis (Mulga snake).